Reading from the N-terminus, the 812-residue chain is Valine--tRNA ligase (812 aa).

A 'HIGH' region motif is present at residues 46-56 (PTVSGQLHIGH). Positions 536–540 (KMSKS) match the 'KMSKS' region motif. Residue Lys539 coordinates ATP.

Belongs to the class-I aminoacyl-tRNA synthetase family. ValS type 2 subfamily. As to quaternary structure, monomer.

It localises to the cytoplasm. The catalysed reaction is tRNA(Val) + L-valine + ATP = L-valyl-tRNA(Val) + AMP + diphosphate. Its function is as follows. Catalyzes the attachment of valine to tRNA(Val). As ValRS can inadvertently accommodate and process structurally similar amino acids such as threonine, to avoid such errors, it has a 'posttransfer' editing activity that hydrolyzes mischarged Thr-tRNA(Val) in a tRNA-dependent manner. In Rickettsia rickettsii (strain Iowa), this protein is Valine--tRNA ligase.